We begin with the raw amino-acid sequence, 433 residues long: Legumain (433 aa).

Positions 1-17 (MIWEFTVLLSLVLGTGA) are cleaved as a signal peptide. Positions 18 to 25 (VPLEDPED) are excised as a propeptide. Asparagine 91 carries an N-linked (GlcNAc...) asparagine glycan. Histidine 148 is a catalytic residue. N-linked (GlcNAc...) asparagine glycosylation is present at asparagine 167. The active-site Nucleophile is the cysteine 189. N-linked (GlcNAc...) asparagine glycosylation is found at asparagine 263 and asparagine 272. Positions 324-433 (DLQESRRLVQ…SMNKVCHGYY (110 aa)) are excised as a propeptide. Intrachain disulfides connect cysteine 378/cysteine 412 and cysteine 390/cysteine 429.

It belongs to the peptidase C13 family. In terms of assembly, homodimer before autocatalytic removal of the propeptide. Monomer after autocatalytic processing. May interact with integrins. Post-translationally, activated by autocatalytic processing at pH 4. In terms of tissue distribution, detected in kidney (at protein level).

It is found in the lysosome. It catalyses the reaction Hydrolysis of proteins and small molecule substrates at -Asn-|-Xaa- bonds.. Its function is as follows. Has a strict specificity for hydrolysis of asparaginyl bonds. Can also cleave aspartyl bonds slowly, especially under acidic conditions. Involved in the processing of proteins for MHC class II antigen presentation in the lysosomal/endosomal system. Also involved in MHC class I antigen presentation in cross-presenting dendritic cells by mediating cleavage and maturation of Perforin-2 (MPEG1), thereby promoting antigen translocation in the cytosol. Required for normal lysosomal protein degradation in renal proximal tubules. Required for normal degradation of internalized EGFR. Plays a role in the regulation of cell proliferation via its role in EGFR degradation. The sequence is that of Legumain (LGMN) from Bos taurus (Bovine).